The chain runs to 506 residues: MSFSVEVLAGIAIELQRGIGHQDRFQRLITTLRQVLACDASALLRYESRQFIPLAIDGLAQDVLGRRFTLEGHPRLEAIARAGDVVRFPADSDLPDPYDGLIPGQESLKVHACVGLPLFAGQNLIGALTLDAMTPEQFEVFSDEELRLVAALAAGALSNALLIEQLESQNMLPGSSGVFEPIKETHMIGLSPAMTQLKKEIEIVAGSDLNVLIGGETGTGKELVAKAIHQGSPRAVNPLVYLNCAALPESVAESELFGHVKGAFTGAISNRSGKFEMADNGTLFLDEIGELSLALQAKLLRVLQYGDIQRVGDDRSLRVDVRVLAATNRDLREEVLTGRFRADLFHRLSVFPLFVPPLRERGDDVVLLAGYFCEQCRLRLGLSRVVLSPDARRHLLNYGWPGNVRELEHAIHRAVVLARATRAGDEVILEAQHFALPEDVLPAPPAESFLALPTCRNLRESTENFQREMIRQALAQNNHNWAASARALETDVANLHRLAKRLGLKD.

A 4-aspartylphosphate modification is found at Asp-57. The region spanning Met-187–Val-416 is the Sigma-54 factor interaction domain. ATP-binding positions include Gly-215 to Glu-222 and Ala-278 to Glu-287. A DNA-binding region (H-T-H motif) is located at residues Trp-481–Lys-500.

It functions in the pathway nitrogen metabolism; nitric oxide reduction. In terms of biological role, required for the expression of anaerobic nitric oxide (NO) reductase, acts as a transcriptional activator for at least the norVW operon. Activation also requires sigma-54. In Salmonella dublin (strain CT_02021853), this protein is Anaerobic nitric oxide reductase transcription regulator NorR.